The chain runs to 406 residues: MTVSTESNFPHGASTQKPQSAEPEIYSSLTKSLDFSNDAEEKWWTRTAPLLSRILDSAGYTLPQQCQFLTLFNTLMIPNFGPHPHIWHSSITHSGLPVEFSVNYQPGKQPTVRIGFEPASSISGTARDPYNMVTVLNVLNKMSRLNFKGFDPSLFHTLISSLALSKNESDLLQGAKLEGSKFKTQAAFGLDLKGDAVTVKTYLYPALKCKVSGLAFSELLEAALAKHQNAHDFSRVLPLVQSYMEEGQCYNQYSFVGFDCVDSSKSRLKIYGALLDISWKKVEEVWTLGARLVNSETNKEGLRYMRALWEYLTPGKERRPVGIWNYELLPGSEEPMPKFYVDMNGENDFQNALGITKFLHHIGLTTTAEGLISKIQEYLYGVPHYPLSQTHVLFANQGPMQPRCEP.

Residues 1 to 19 (MTVSTESNFPHGASTQKPQ) show a composition bias toward polar residues. Residues 1–23 (MTVSTESNFPHGASTQKPQSAEP) form a disordered region. Position 99 (Glu-99) interacts with brevianamide F. Arg-113, Lys-200, and Tyr-202 together coordinate dimethylallyl diphosphate. Residue Tyr-204 coordinates brevianamide F. Residues Lys-269, Tyr-271, and Tyr-340 each coordinate dimethylallyl diphosphate.

It belongs to the tryptophan dimethylallyltransferase family.

It functions in the pathway alkaloid biosynthesis. In terms of biological role, prenyltransferase; part of the gene cluster that mediates the biosynthesis of paraherquamide, a fungal indole alkaloid that belongs to a family of natural products containing a characteristic bicyclo[2.2.2]diazaoctane core. The first steps in the biosynthesis of paraherquamide is the production of the beta-methyl-proline precursor from L-isoleucine. They require oxidation of a terminally hydroxylated L-isoleucine to the corresponding aldehyde by enzymes which have still to be identified. Spontaneous cyclization and dehydration would yield the 4-methyl pyrolline-5-carboxylic acid, which is then reduced by the pyrroline-5-carboxylate reductase phqD leading to the beta-methyl-proline precursor. The next step of paraherquamide biosynthesis involves coupling of beta-methyl-proline and L-tryptophan by the bimodular NRPS phqB, to produce a monooxopiperazine intermediate. The reductase (R) domain of phqB utilizes NADPH for hydride transfer to reduce the thioester bond of the T domain-tethered linear dipeptide to a hemithioaminal intermediate, which spontaneously cleaves the C-S bond to release the aldehyde product. This compound undergoes spontaneous cyclization and dehydration to give a dienamine which is reverse prenylated at C-2 by the reverse prenyltransferase phqJ. The other prenyltransferase present in the cluster, phqI may be a redundant gene in the pathway. During biosynthetic assembly, the key step to produce the polycyclic core is catalyzed by the bifunctional reductase and intramolecular [4+2] Diels-Alderase, phqE, resulting in formation of the [2.2.2] diazaoctane intermediate preparaherquamide. Following formation of preparaherquamide, an indole 2,3-epoxidation-initiated pinacol-like rearrangement is catalyzed by the phqK FAD-dependent monooxygenase. The prenyltransferase phqA, the cytochrome P450 monooxygenase phqL, and the FAD-linked oxidoreductase phqH (or the cytochrome P450 monooxygenase phqM), are proposed to be involved in the formation of the pyran ring. The FAD-dependent monooxygenase phqK is likely responsible for generation of the spiro-oxindole, and the N-methylation is likely mediated by the phqN methyltransferase leading to the isolable natural product paraherquamide F. However, the order of these biosynthetic steps has still to be determined. In late-stage paraherquamide biosynthesis, the third P450 monooxygenase, phqO, is probably responsible for the C-14 hydroxylation, transforming paraherquamide F to paraherquamide G, and paraherquamide E to the final product paraherquamide A. The expansion from the 6-membered ring pyran (in paraherquamides F and G) to the 7-membered dioxepin ring (in paraherquamides A and E) represents a poorly understood but intriguing process that probably involves the 2-oxoglutarate-dependent dioxygenase phqC. Finally, the remaining members of the paraherquamide cluster, including phqI as well as phqM (or phqH), do not have a clearly prescribed role and appear to be redundant. The chain is Prenyltransferase phqJ from Penicillium fellutanum.